The chain runs to 465 residues: Ribulose bisphosphate carboxylase large chain (465 aa).

Residue lysine 4 is modified to N6,N6,N6-trimethyllysine. The substrate site is built by asparagine 113 and threonine 163. The Proton acceptor role is filled by lysine 165. Residue lysine 167 coordinates substrate. Mg(2+) contacts are provided by lysine 191, aspartate 193, and glutamate 194. Lysine 191 carries the N6-carboxylysine modification. Histidine 284 (proton acceptor) is an active-site residue. Positions 285, 317, and 369 each coordinate substrate.

It belongs to the RuBisCO large chain family. Type I subfamily. As to quaternary structure, heterohexadecamer of 8 large chains and 8 small chains; disulfide-linked. The disulfide link is formed within the large subunit homodimers. Requires Mg(2+) as cofactor. The disulfide bond which can form in the large chain dimeric partners within the hexadecamer appears to be associated with oxidative stress and protein turnover.

The protein localises to the plastid. It localises to the chloroplast. The catalysed reaction is 2 (2R)-3-phosphoglycerate + 2 H(+) = D-ribulose 1,5-bisphosphate + CO2 + H2O. The enzyme catalyses D-ribulose 1,5-bisphosphate + O2 = 2-phosphoglycolate + (2R)-3-phosphoglycerate + 2 H(+). RuBisCO catalyzes two reactions: the carboxylation of D-ribulose 1,5-bisphosphate, the primary event in carbon dioxide fixation, as well as the oxidative fragmentation of the pentose substrate in the photorespiration process. Both reactions occur simultaneously and in competition at the same active site. The protein is Ribulose bisphosphate carboxylase large chain of Hamamelis mollis (Chinese witch hazel).